Consider the following 429-residue polypeptide: MSKSLQAIRGMNDILPEQSPLWRYFEGTVAGLLDTYGYSQIRTPIVEFTELFKRSIGEVTDIVEKEMYTFEDRNGDSLTLRPEGTAACVRAVLEHGITGNGQVQKLWYIGQMFRHERPQKGRYRQFHQIGVEVFNLDGPDIDAELIMLTWRLWGLLGIQDAVKLELNSLGTSEARARYRDALVEFLSARLEQLDEDSQRRLKSNPLRILDSKDQNTQAVLVGAPKLEDYLDEESRVHFEGLKARLDAAGIPFVINTKLVRGLDYYSKTVFEWVTDKLGAQGTVCAGGRYDGLVEQMGGKPTTGVGFAMGIERLILLLETLGKVPESISRQIDVYLCAFGEQAELAGLRLSEGLRDRLPGLRLAVNAGGGSFKSQFKKADKSGALFALILGDDELAKQEIGLKPLRGQGEQQNIAWDALAEHLETAIAQA.

This sequence belongs to the class-II aminoacyl-tRNA synthetase family. Homodimer.

It localises to the cytoplasm. It catalyses the reaction tRNA(His) + L-histidine + ATP = L-histidyl-tRNA(His) + AMP + diphosphate + H(+). In Pseudomonas putida (strain GB-1), this protein is Histidine--tRNA ligase.